Consider the following 317-residue polypeptide: Melanocyte-stimulating hormone receptor (317 aa).

At 1-37 (MPMQGAQRRLLGSLNSTPTATPNLGLAANHTGAPCLE) the chain is on the extracellular side. N29 is a glycosylation site (N-linked (GlcNAc...) asparagine). A helical transmembrane segment spans residues 38–63 (VSIPDGLFLSLGLVSLVENVLVVAAI). Topologically, residues 64–72 (AKNRNLHSP) are cytoplasmic. A helical transmembrane segment spans residues 73–93 (MYCFICCLALSDLLVSGSNML). Residues 94–118 (EMAVILLLEAGALATRASVVQQLQN) are Extracellular-facing. A helical membrane pass occupies residues 119 to 140 (TIDVLTCSSMLCSLCFLGAIAV). At 141–163 (DRYVSIFYALRYHSIVTLPRARR) the chain is on the cytoplasmic side. A helical membrane pass occupies residues 164 to 183 (AIAAIWVASVLSSTLFIAYC). The Extracellular portion of the chain corresponds to 184 to 191 (DHAAVLLC). A helical transmembrane segment spans residues 192-211 (LVVFFLAMLVLMAVLYVHML). Residues 212 to 240 (ARACQHAQGITRLHKRQLPAHQGFGLRGA) are Cytoplasmic-facing. A helical transmembrane segment spans residues 241–266 (ATLTILLGIFFVCWGPFFLHLMLVVL). The Extracellular segment spans residues 267 to 279 (CPQHLTCSCIFKN). The helical transmembrane segment at 280–300 (FKVFLTLIICNTIIDPLIYAF) threads the bilayer. Over 301 to 317 (RSQELCRTLKEVLLCSW) the chain is Cytoplasmic. A lipid anchor (S-palmitoyl cysteine) is attached at C315.

Belongs to the G-protein coupled receptor 1 family. In terms of assembly, interacts with MGRN1, but does not undergo MGRN1-mediated ubiquitination; this interaction competes with GNAS-binding and thus inhibits agonist-induced cAMP production. Interacts with OPN3; the interaction results in a decrease in MC1R-mediated cAMP signaling and ultimately a decrease in melanin production in melanocytes.

It is found in the cell membrane. Receptor for MSH (alpha, beta and gamma) and ACTH. The activity of this receptor is mediated by G proteins which activate adenylate cyclase. Mediates melanogenesis, the production of eumelanin (black/brown) and phaeomelanin (red/yellow), via regulation of cAMP signaling in melanocytes. The polypeptide is Melanocyte-stimulating hormone receptor (MC1R) (Alouatta sara (Bolivian red howler monkey)).